The chain runs to 251 residues: uncharacterized protein (251 aa).

In terms of domain architecture, Response regulatory spans 3 to 118; it reads KVVICDDERI…QLEHILDILV (116 aa). Aspartate 55 bears the 4-aspartylphosphate mark. The HTH araC/xylS-type domain maps to 152–249; that stretch reads NQILSQIKQH…HMSPSDYNKL (98 aa). DNA-binding regions (H-T-H motif) lie at residues 169–190 and 216–239; these read LDLI…KEHV and HYEI…KKYL.

Phosphorylated by SE_0166.

It localises to the cytoplasm. Probable member of the two-component regulatory system SE_0166/SE_0165. This is an uncharacterized protein from Staphylococcus epidermidis (strain ATCC 12228 / FDA PCI 1200).